An 858-amino-acid chain; its full sequence is MTITSKLKKRRSLSTLITKIIILVLAPIILGIFVQSYYFSKQIIWQEVDRTKQQTSALILNIFESHFAAIQIHHDSNSKSDVILDFYSERNEEALNYFFLSIDQSDPSHTPEFRFLTDHQGIIWDDGNAHFYGINDSMLDGLTSKVTFSNNWYYVTSITSMGARHLLLRRVPVLEPKTGEVMGYSYNAVVLDNNFALMEKLKNEGNVDNVVLVANDIPVASSLAGDESYKIFDVLKRKETQKKLDQLLIIQTPIEVNAAITNLKLLTVQDNQSVVTLQIQHFLAMLASVIGMIMIALMTKEWIENRVVEELGSLMSYTRSAREEKGFERFGGSDIEEFDHIGSTLESTFEELEAQKRSFRDLFNFALSPIMVWSEAGVLIQINPAARKELVIENDIETMHPVFKGFKDKLVPHLRMAAQGATLTGVNVPIGDKVFRWNLSPIRVDGDISGIIVQGQDITTLIEAEKQSNLARREAEKSAQARADFLAKMSHEIRTPINGILGVAQLLKDSVEAEEQKNQIDVLRHSGEHLLAVLNDILDFSKIEQGKFNIQKHPFSFADTMRTLENIYRPICENKGVELVIENQLDGNVEIFTDQVRLNQILFNLVSNAVKFTPSGCVRLHAELEQFYGADNSVLVVEISDTGIGIESDKLDEMFEPFVQEEATTTREYGGSGLGLTIVKNLVDMLDGDVQVRSQKGQGTTFVVTLPVKDRERVLAPLDSSQRVKPAELFDESLKVLLVEDNHTNAFILKAFCTKYKMQVDWAKDGLEAMEFLKDHSYDLILMDNQLPHLGGIETTKEIRQNLKLGTPIYACTADTAQETSDAFMEAGANYVLLKPIKENALHEAFVDFKQRFLIERT.

2 helical membrane passes run 14–34 and 362–382; these read STLITKIIILVLAPIILGIFV and LFNFALSPIMVWSEAGVLIQI. Residues 488–710 form the Histidine kinase domain; sequence KMSHEIRTPI…TFVVTLPVKD (223 aa). Phosphohistidine; by autocatalysis is present on H491. Residues 735–850 enclose the Response regulatory domain; it reads KVLLVEDNHT…ALHEAFVDFK (116 aa). D784 bears the 4-aspartylphosphate mark.

In terms of assembly, binds the complex formed by the autoinducer and LuxP.

Its subcellular location is the cell inner membrane. It carries out the reaction ATP + protein L-histidine = ADP + protein N-phospho-L-histidine.. In terms of biological role, at low cell density, in absence of autoinducer has a kinase activity, and autophosphorylates on a histidine residue. The phosphoryl group is then transferred to an aspartate residue in the response regulator domain. The phosphoryl group is transferred to LuxU, and ultimately to LuxO. At high cell density, in the presence of autoinducer, the kinase activity is inactivated, and the response regulator domain has a phosphatase activity. In Vibrio parahaemolyticus serotype O3:K6 (strain RIMD 2210633), this protein is Autoinducer 2 sensor kinase/phosphatase LuxQ (luxQ).